The sequence spans 236 residues: Biosynthetic peptidoglycan transglycosylase (236 aa).

A helical transmembrane segment spans residues 12–31 (ALFWFAAGSIVLVLVFRWVP).

It belongs to the glycosyltransferase 51 family.

It localises to the cell inner membrane. The enzyme catalyses [GlcNAc-(1-&gt;4)-Mur2Ac(oyl-L-Ala-gamma-D-Glu-L-Lys-D-Ala-D-Ala)](n)-di-trans,octa-cis-undecaprenyl diphosphate + beta-D-GlcNAc-(1-&gt;4)-Mur2Ac(oyl-L-Ala-gamma-D-Glu-L-Lys-D-Ala-D-Ala)-di-trans,octa-cis-undecaprenyl diphosphate = [GlcNAc-(1-&gt;4)-Mur2Ac(oyl-L-Ala-gamma-D-Glu-L-Lys-D-Ala-D-Ala)](n+1)-di-trans,octa-cis-undecaprenyl diphosphate + di-trans,octa-cis-undecaprenyl diphosphate + H(+). It functions in the pathway cell wall biogenesis; peptidoglycan biosynthesis. Peptidoglycan polymerase that catalyzes glycan chain elongation from lipid-linked precursors. The chain is Biosynthetic peptidoglycan transglycosylase from Pseudomonas putida (strain W619).